We begin with the raw amino-acid sequence, 426 residues long: CinA-like protein (426 aa).

This sequence belongs to the CinA family.

This Gloeobacter violaceus (strain ATCC 29082 / PCC 7421) protein is CinA-like protein.